A 172-amino-acid chain; its full sequence is 3-hydroxydecanoyl-[acyl-carrier-protein] dehydratase (172 aa).

His-70 is a catalytic residue.

It belongs to the thioester dehydratase family. FabA subfamily. As to quaternary structure, homodimer.

It is found in the cytoplasm. It catalyses the reaction a (3R)-hydroxyacyl-[ACP] = a (2E)-enoyl-[ACP] + H2O. The enzyme catalyses (3R)-hydroxydecanoyl-[ACP] = (2E)-decenoyl-[ACP] + H2O. It carries out the reaction (2E)-decenoyl-[ACP] = (3Z)-decenoyl-[ACP]. The protein operates within lipid metabolism; fatty acid biosynthesis. Functionally, necessary for the introduction of cis unsaturation into fatty acids. Catalyzes the dehydration of (3R)-3-hydroxydecanoyl-ACP to E-(2)-decenoyl-ACP and then its isomerization to Z-(3)-decenoyl-ACP. Can catalyze the dehydratase reaction for beta-hydroxyacyl-ACPs with saturated chain lengths up to 16:0, being most active on intermediate chain length. In Xylella fastidiosa (strain M12), this protein is 3-hydroxydecanoyl-[acyl-carrier-protein] dehydratase.